The sequence spans 276 residues: Sulfur carrier protein FdhD (276 aa).

The active-site Cysteine persulfide intermediate is cysteine 122. 259–264 is a binding site for Mo-bis(molybdopterin guanine dinucleotide); it reads FCRRGR.

Belongs to the FdhD family.

The protein localises to the cytoplasm. Functionally, required for formate dehydrogenase (FDH) activity. Acts as a sulfur carrier protein that transfers sulfur from IscS to the molybdenum cofactor prior to its insertion into FDH. In Proteus mirabilis (strain HI4320), this protein is Sulfur carrier protein FdhD.